Reading from the N-terminus, the 451-residue chain is Tubulin alpha-2 chain (451 aa).

Residue Q11 coordinates GTP. Residue K40 is modified to N6-acetyllysine. The GTP site is built by E71, G144, T145, T179, N206, and N228. E71 serves as a coordination point for Mg(2+). E254 is an active-site residue.

This sequence belongs to the tubulin family. As to quaternary structure, dimer of alpha and beta chains. A typical microtubule is a hollow water-filled tube with an outer diameter of 25 nm and an inner diameter of 15 nM. Alpha-beta heterodimers associate head-to-tail to form protofilaments running lengthwise along the microtubule wall with the beta-tubulin subunit facing the microtubule plus end conferring a structural polarity. Microtubules usually have 13 protofilaments but different protofilament numbers can be found in some organisms and specialized cells. Requires Mg(2+) as cofactor. Post-translationally, undergoes a tyrosination/detyrosination cycle, the cyclic removal and re-addition of a C-terminal tyrosine residue by the enzymes tubulin tyrosine carboxypeptidase (TTCP) and tubulin tyrosine ligase (TTL), respectively. Acetylation of alpha chains at Lys-40 stabilizes microtubules and affects affinity and processivity of microtubule motors. This modification has a role in multiple cellular functions, ranging from cell motility, cell cycle progression or cell differentiation to intracellular trafficking and signaling.

Its subcellular location is the cytoplasm. The protein resides in the cytoskeleton. It carries out the reaction GTP + H2O = GDP + phosphate + H(+). Functionally, tubulin is the major constituent of microtubules, a cylinder consisting of laterally associated linear protofilaments composed of alpha- and beta-tubulin heterodimers. Microtubules grow by the addition of GTP-tubulin dimers to the microtubule end, where a stabilizing cap forms. Below the cap, tubulin dimers are in GDP-bound state, owing to GTPase activity of alpha-tubulin. This chain is Tubulin alpha-2 chain (TUBA2), found in Hordeum vulgare (Barley).